We begin with the raw amino-acid sequence, 375 residues long: Adiponectin receptor protein 1 (375 aa).

Residues 1 to 60 (MSSHKGSAGAQGNGAPSGNREADTVELAELGPLLEEKGKRAASSPAKAEEDQACPVPQEE) form a disordered region. Residues 1 to 136 (MSSHKGSAGA…SIFRIHTETG (136 aa)) are Cytoplasmic-facing. Residues 137–157 (NIWTHLLGFVLFLFLGILTML) traverse the membrane as a helical segment. Topologically, residues 158–170 (RPNMYFMAPLQEK) are extracellular. The chain crosses the membrane as a helical span at residues 171–191 (VVFGMFFLGAVLCLSFSWLFH). Residue His191 coordinates Zn(2+). Residues 192 to 203 (TVYCHSEKVSRT) are Cytoplasmic-facing. The chain crosses the membrane as a helical span at residues 204-224 (FSKLDYSGIALLIMGSFVPWL). Topologically, residues 225-234 (YYSFYCSPQP) are extracellular. Residues 235-255 (RLIYLSIVCVLGISAIIVAQW) form a helical membrane-spanning segment. Residues 256 to 264 (DRFATPKHR) lie on the Cytoplasmic side of the membrane. A helical membrane pass occupies residues 265–285 (QTRAGVFLGLGLSGVVPTMHF). Over 286–298 (TIAEGFVKATTVG) the chain is Extracellular. Residues 299–319 (QMGWFFLMAVMYITGAGLYAA) traverse the membrane as a helical segment. Over 320–337 (RIPERFFPGKFDIWFQSH) the chain is Cytoplasmic. Zn(2+)-binding residues include His337 and His341. The helical transmembrane segment at 338–358 (QIFHVLVVAAAFVHFYGVSNL) threads the bilayer. Topologically, residues 359–375 (QEFRYGLEGGCTDDSLL) are extracellular.

It belongs to the ADIPOR family. As to quaternary structure, may form homooligomers and heterooligomers with ADIPOR2. Interacts with APPL2 (via BAR domain); hinders the accessibility of APPL1 to ADIPOR1; negatively regulates adiponectin signaling; ADIPOQ dissociates this interaction and facilitates the recruitment of APPL1 to ADIPOR1. Interacts with APPL1; ADIPOQ enhances this interaction; inhibites adiponectin-stimulated binding of APPL2 to ADIPOR1. Detected in brain and quadriceps muscle (at protein level). Widely expressed. Expressed in heart, kidney, liver, lung, skeletal muscle, white adipose tissue, brown adipose tissue, aorta and spleen. Weakly expressed in brain and testis.

It localises to the cell membrane. Receptor for ADIPOQ, an essential hormone secreted by adipocytes that regulates glucose and lipid metabolism. Required for normal glucose and fat homeostasis and for maintaining a normal body weight. ADIPOQ-binding activates a signaling cascade that leads to increased AMPK activity, and ultimately to increased fatty acid oxidation, increased glucose uptake and decreased gluconeogenesis. Has high affinity for globular adiponectin and low affinity for full-length adiponectin. This chain is Adiponectin receptor protein 1, found in Mus musculus (Mouse).